We begin with the raw amino-acid sequence, 322 residues long: Beta-ketoacyl-[acyl-carrier-protein] synthase III (322 aa).

Active-site residues include C113 and H249. An ACP-binding region spans residues 250–254 (QANLR). N279 is a catalytic residue.

Belongs to the thiolase-like superfamily. FabH family. Homodimer.

It localises to the cytoplasm. The enzyme catalyses malonyl-[ACP] + acetyl-CoA + H(+) = 3-oxobutanoyl-[ACP] + CO2 + CoA. The protein operates within lipid metabolism; fatty acid biosynthesis. Catalyzes the condensation reaction of fatty acid synthesis by the addition to an acyl acceptor of two carbons from malonyl-ACP. Catalyzes the first condensation reaction which initiates fatty acid synthesis and may therefore play a role in governing the total rate of fatty acid production. Possesses both acetoacetyl-ACP synthase and acetyl transacylase activities. Its substrate specificity determines the biosynthesis of branched-chain and/or straight-chain of fatty acids. This Marinobacter nauticus (strain ATCC 700491 / DSM 11845 / VT8) (Marinobacter aquaeolei) protein is Beta-ketoacyl-[acyl-carrier-protein] synthase III.